The sequence spans 145 residues: Basic phospholipase A2 textilotoxin A chain (145 aa).

An N-terminal signal peptide occupies residues 1–19 (MHPAHLLVLLGVCVSLLGA). Positions 20–27 (SDIPPLPL) are excised as a propeptide. 7 disulfides stabilise this stretch: Cys-38–Cys-98, Cys-54–Cys-144, Cys-56–Cys-72, Cys-71–Cys-125, Cys-78–Cys-118, Cys-87–Cys-111, and Cys-105–Cys-116. Residues Tyr-55, Gly-57, and Gly-59 each coordinate Ca(2+). His-75 is a catalytic residue. Asp-76 is a binding site for Ca(2+). Residue Asp-119 is part of the active site.

The protein belongs to the phospholipase A2 family. Group I subfamily. D49 sub-subfamily. In terms of assembly, heterohexamer. 2 forms exist: 2 A or 2 B chains, 2 C chains and 2 covalently-linked D chains, and 1 A or 1 B, 1 C, 2 covalently-linked D chains and 2 differentially glycosylated covalently-linked D chains. Textilotoxin was originally described as pentameric. Ca(2+) is required as a cofactor. In terms of tissue distribution, expressed by the venom gland.

It localises to the secreted. It carries out the reaction a 1,2-diacyl-sn-glycero-3-phosphocholine + H2O = a 1-acyl-sn-glycero-3-phosphocholine + a fatty acid + H(+). In terms of biological role, snake venom oligomeric phospholipase A2 that has potent presynaptic neurotoxicity. Chain A possesses a very low toxicity, but is essential for neurotoxicity. Possesses a low enzymatic activity. PLA2 catalyzes the calcium-dependent hydrolysis of the 2-acyl groups in 3-sn-phosphoglycerides. In Pseudonaja textilis (Eastern brown snake), this protein is Basic phospholipase A2 textilotoxin A chain.